A 141-amino-acid chain; its full sequence is Nucleoside diphosphate kinase (141 aa).

ATP-binding residues include Lys-11, Phe-59, Arg-87, Thr-93, Arg-104, and Asn-114. Residue His-117 is the Pros-phosphohistidine intermediate of the active site.

The protein belongs to the NDK family. As to quaternary structure, homotetramer. Requires Mg(2+) as cofactor.

It localises to the cytoplasm. It carries out the reaction a 2'-deoxyribonucleoside 5'-diphosphate + ATP = a 2'-deoxyribonucleoside 5'-triphosphate + ADP. It catalyses the reaction a ribonucleoside 5'-diphosphate + ATP = a ribonucleoside 5'-triphosphate + ADP. Major role in the synthesis of nucleoside triphosphates other than ATP. The ATP gamma phosphate is transferred to the NDP beta phosphate via a ping-pong mechanism, using a phosphorylated active-site intermediate. The sequence is that of Nucleoside diphosphate kinase from Teredinibacter turnerae (strain ATCC 39867 / T7901).